Reading from the N-terminus, the 142-residue chain is HTH-type transcriptional regulator MntR (142 aa).

One can recognise an HTH dtxR-type domain in the interval 1 to 63 (MPTPSMEDYI…YEKYRGLVLT (63 aa)). Mn(2+) is bound by residues Asp8, Glu11, His77, Glu99, Glu102, and His103.

It belongs to the DtxR/MntR family. In terms of assembly, homodimer.

The protein localises to the cytoplasm. With respect to regulation, DNA binding is strongly activated by Mn(2+). Functionally, central regulator of manganese homeostasis. The chain is HTH-type transcriptional regulator MntR from Bacillus mycoides (strain KBAB4) (Bacillus weihenstephanensis).